A 442-amino-acid chain; its full sequence is KICSTOR subunit 2 (442 aa).

The protein belongs to the KICS2 family. As to quaternary structure, may be part of the KICSTOR complex.

The protein localises to the lysosome membrane. Functionally, as part of the KICSTOR complex may function in the amino acid-sensing branch of the TORC1 signaling pathway. This is KICSTOR subunit 2 (kics2) from Xenopus laevis (African clawed frog).